The primary structure comprises 144 residues: 3-hydroxyacyl-[acyl-carrier-protein] dehydratase FabZ (144 aa).

His47 is an active-site residue.

This sequence belongs to the thioester dehydratase family. FabZ subfamily.

It is found in the cytoplasm. It carries out the reaction a (3R)-hydroxyacyl-[ACP] = a (2E)-enoyl-[ACP] + H2O. In terms of biological role, involved in unsaturated fatty acids biosynthesis. Catalyzes the dehydration of short chain beta-hydroxyacyl-ACPs and long chain saturated and unsaturated beta-hydroxyacyl-ACPs. This Dechloromonas aromatica (strain RCB) protein is 3-hydroxyacyl-[acyl-carrier-protein] dehydratase FabZ.